Reading from the N-terminus, the 307-residue chain is Transcription initiation factor IIB 5 (307 aa).

The TFIIB-type zinc finger occupies 19–47; the sequence is TTEPCPECGGPVRTNSAETVCADCGLIID. Cysteine 23, cysteine 26, cysteine 39, and cysteine 42 together coordinate Zn(2+). Composition is skewed to basic and acidic residues over residues 54–66 and 107–121; these read GPEW…DTAK and MRRE…STKE. Residues 54-121 are disordered; that stretch reads GPEWHRDDAD…SRGRWRSTKE (68 aa). 2 repeat units span residues 129-212 and 223-304.

It belongs to the TFIIB family.

Its function is as follows. Stabilizes TBP binding to an archaeal box-A promoter. Also responsible for recruiting RNA polymerase II to the pre-initiation complex (DNA-TBP-TFIIB). This is Transcription initiation factor IIB 5 from Halobacterium salinarum (strain ATCC 700922 / JCM 11081 / NRC-1) (Halobacterium halobium).